The chain runs to 527 residues: EGF domain-specific O-linked N-acetylglucosamine transferase (527 aa).

A signal peptide spans 1–17 (MLMLFVFGVLLHEVSLS). The Required for optimal activity motif lies at 295–297 (DYD). Residue asparagine 354 is glycosylated (N-linked (GlcNAc...) asparagine). The short motif at 524–527 (HDEL) is the Prevents secretion from ER element.

It belongs to the glycosyltransferase 61 family.

Its subcellular location is the endoplasmic reticulum lumen. It carries out the reaction L-seryl-[protein] + UDP-N-acetyl-alpha-D-glucosamine = 3-O-(N-acetyl-beta-D-glucosaminyl)-L-seryl-[protein] + UDP + H(+). The enzyme catalyses L-threonyl-[protein] + UDP-N-acetyl-alpha-D-glucosamine = 3-O-(N-acetyl-beta-D-glucosaminyl)-L-threonyl-[protein] + UDP + H(+). In terms of biological role, catalyzes the transfer of a single N-acetylglucosamine from UDP-GlcNAc to a serine or threonine residue in extracellular proteins resulting in their modification with a beta-linked N-acetylglucosamine (O-GlcNAc). Specifically glycosylates the Thr residue located between the fifth and sixth conserved cysteines of folded EGF-like domains. The polypeptide is EGF domain-specific O-linked N-acetylglucosamine transferase (EOGT) (Pan troglodytes (Chimpanzee)).